The chain runs to 582 residues: Phosphoribosylaminoimidazole carboxylase (582 aa).

One can recognise an ATP-grasp domain in the interval 114-305 (KKYLAEKGVA…QFENHLRAIL (192 aa)). 143-200 (AGRLGLPLMLKAKTLAYDGRGNSPLKSTSSEDIQASLKFLGDRPLYAEGWAPFVKEVA) contributes to the ATP binding site.

In the C-terminal section; belongs to the AIR carboxylase family. Class I subfamily.

The catalysed reaction is 5-amino-1-(5-phospho-D-ribosyl)imidazole-4-carboxylate + H(+) = 5-amino-1-(5-phospho-beta-D-ribosyl)imidazole + CO2. Its pathway is purine metabolism; IMP biosynthesis via de novo pathway; 5-amino-1-(5-phospho-D-ribosyl)imidazole-4-carboxylate from 5-amino-1-(5-phospho-D-ribosyl)imidazole (carboxylase route): step 1/1. This Cryptococcus neoformans var. grubii serotype A (strain H99 / ATCC 208821 / CBS 10515 / FGSC 9487) (Filobasidiella neoformans var. grubii) protein is Phosphoribosylaminoimidazole carboxylase (ADE2).